Consider the following 212-residue polypeptide: Protein-L-isoaspartate O-methyltransferase 1 (212 aa).

The active site involves S60.

This sequence belongs to the methyltransferase superfamily. L-isoaspartyl/D-aspartyl protein methyltransferase family.

It localises to the cytoplasm. The catalysed reaction is [protein]-L-isoaspartate + S-adenosyl-L-methionine = [protein]-L-isoaspartate alpha-methyl ester + S-adenosyl-L-homocysteine. Catalyzes the methyl esterification of L-isoaspartyl residues in peptides and proteins that result from spontaneous decomposition of normal L-aspartyl and L-asparaginyl residues. It plays a role in the repair and/or degradation of damaged proteins. In Anaeromyxobacter sp. (strain Fw109-5), this protein is Protein-L-isoaspartate O-methyltransferase 1.